We begin with the raw amino-acid sequence, 398 residues long: Succinate--CoA ligase [ADP-forming] subunit beta (398 aa).

The ATP-grasp domain occupies 9-253 (KQVLAKYGVA…ESEEDPAELE (245 aa)). Residues K46, 53 to 55 (GRG), E108, C111, and E116 contribute to the ATP site. Positions 208 and 222 each coordinate Mg(2+). Substrate is bound by residues N273 and 330 to 332 (GIM).

This sequence belongs to the succinate/malate CoA ligase beta subunit family. Heterotetramer of two alpha and two beta subunits. It depends on Mg(2+) as a cofactor.

It catalyses the reaction succinate + ATP + CoA = succinyl-CoA + ADP + phosphate. The enzyme catalyses GTP + succinate + CoA = succinyl-CoA + GDP + phosphate. The protein operates within carbohydrate metabolism; tricarboxylic acid cycle; succinate from succinyl-CoA (ligase route): step 1/1. Its function is as follows. Succinyl-CoA synthetase functions in the citric acid cycle (TCA), coupling the hydrolysis of succinyl-CoA to the synthesis of either ATP or GTP and thus represents the only step of substrate-level phosphorylation in the TCA. The beta subunit provides nucleotide specificity of the enzyme and binds the substrate succinate, while the binding sites for coenzyme A and phosphate are found in the alpha subunit. This chain is Succinate--CoA ligase [ADP-forming] subunit beta, found in Paramagnetospirillum magneticum (strain ATCC 700264 / AMB-1) (Magnetospirillum magneticum).